Here is a 218-residue protein sequence, read N- to C-terminus: N-(5'-phosphoribosyl)anthranilate isomerase (218 aa).

Belongs to the TrpF family.

The catalysed reaction is N-(5-phospho-beta-D-ribosyl)anthranilate = 1-(2-carboxyphenylamino)-1-deoxy-D-ribulose 5-phosphate. The protein operates within amino-acid biosynthesis; L-tryptophan biosynthesis; L-tryptophan from chorismate: step 3/5. This Rhodospirillum rubrum (strain ATCC 11170 / ATH 1.1.1 / DSM 467 / LMG 4362 / NCIMB 8255 / S1) protein is N-(5'-phosphoribosyl)anthranilate isomerase.